Here is a 394-residue protein sequence, read N- to C-terminus: Elongation factor Tu (394 aa).

The 195-residue stretch at 10–204 folds into the tr-type G domain; sequence KPHINIGTIG…AVDDNIPTPE (195 aa). Positions 19–26 are G1; sequence GHVDHGKT. 19 to 26 is a binding site for GTP; the sequence is GHVDHGKT. Residue T26 participates in Mg(2+) binding. Residues 60–64 are G2; it reads GITIN. The tract at residues 81–84 is G3; sequence DCPG. GTP is bound by residues 81–85 and 136–139; these read DCPGH and NKID. Positions 136–139 are G4; that stretch reads NKID. The tract at residues 174–176 is G5; that stretch reads SAL.

Belongs to the TRAFAC class translation factor GTPase superfamily. Classic translation factor GTPase family. EF-Tu/EF-1A subfamily. Monomer.

It is found in the cytoplasm. The enzyme catalyses GTP + H2O = GDP + phosphate + H(+). Functionally, GTP hydrolase that promotes the GTP-dependent binding of aminoacyl-tRNA to the A-site of ribosomes during protein biosynthesis. The sequence is that of Elongation factor Tu from Chlamydia abortus (strain DSM 27085 / S26/3) (Chlamydophila abortus).